Here is a 347-residue protein sequence, read N- to C-terminus: Probable 3-hydroxyisobutyrate dehydrogenase, mitochondrial (347 aa).

Residues 1-34 constitute a mitochondrion transit peptide; it reads MAIRRAQTLLCLSKFKTNFVSGSLHRFSSSSQNS. Residues 38 to 67, 101 to 102, and Thr134 contribute to the NAD(+) site; these read QNVGFIGLGNMGFRMVNNLIRAGYKVTVHD and LP. Lys219 is a catalytic residue. Lys294 is a binding site for NAD(+).

This sequence belongs to the HIBADH-related family. 3-hydroxyisobutyrate dehydrogenase subfamily.

Its subcellular location is the mitochondrion. The enzyme catalyses 3-hydroxy-2-methylpropanoate + NAD(+) = 2-methyl-3-oxopropanoate + NADH + H(+). The protein operates within amino-acid degradation; L-valine degradation. The protein is Probable 3-hydroxyisobutyrate dehydrogenase, mitochondrial of Arabidopsis thaliana (Mouse-ear cress).